A 195-amino-acid chain; its full sequence is MELSEYVQKGFQMLADPGSFDSNTFTLLLRAAFQSLLDAQADEAVLDHPDLKHIDPVVLKHRHAAAATYILEAGKQRADRSTLSTYLEDCKFDSERIELFWTEYQNNRNSLEILLGSIGRSLPHITDVSWRLEYQIKTNQLDKMYRPAYLVTLNVENTDSRSHPEISFSCNMEQLQDLVGKLKDASKSLERATQL.

The 70-residue stretch at histidine 124–threonine 193 folds into the COMM domain.

Belongs to the COMM domain-containing protein 3 family. As to quaternary structure, component of the commander complex consisting of the CCC subcomplex and the retriever subcomplex. Component of the CCC (COMMD/CCDC22/CCDC93) subcomplex consisting of COMMD1, COMMD2, COMMD3, COMMD4, COMMD5, COMMD6, COMMD7, COMMD8, COMMD9, COMMD10, CCDC22 and CCDC93; within the complex forms a heterodimer with COMMD2. Interacts with NFKB1/p105. Interacts with CCDC22, CCDC93, SCNN1B, CUL3, CUL4A, CUL4B, CUL5.

Its subcellular location is the cytoplasm. The protein localises to the nucleus. Scaffold protein in the commander complex that is essential for endosomal recycling of transmembrane cargos; the commander complex is composed of the CCC subcomplex and the retriever subcomplex. May modulate activity of cullin-RING E3 ubiquitin ligase (CRL) complexes. May down-regulate activation of NF-kappa-B. Modulates Na(+) transport in epithelial cells by regulation of apical cell surface expression of amiloride-sensitive sodium channel (ENaC) subunits. The protein is COMM domain-containing protein 3 (COMMD3) of Bos taurus (Bovine).